A 227-amino-acid chain; its full sequence is Cytochrome c oxidase subunit 2 (227 aa).

Residues 1 to 14 (MAYPLQLGLQDATS) lie on the Mitochondrial intermembrane side of the membrane. A helical membrane pass occupies residues 15–45 (PIMEELTSFHDHTLMIVFLISSLVLYIISSM). Topologically, residues 46–59 (LTTKMTHTNTMDAQ) are mitochondrial matrix. A helical transmembrane segment spans residues 60–87 (GVETIWTILPAAILVLIALPSLRILYMM). At 88–227 (DEINNPALTV…HFENWSASMI (140 aa)) the chain is on the mitochondrial intermembrane side. Histidine 161, cysteine 196, glutamate 198, cysteine 200, histidine 204, and methionine 207 together coordinate Cu cation. Position 198 (glutamate 198) interacts with Mg(2+).

It belongs to the cytochrome c oxidase subunit 2 family. Component of the cytochrome c oxidase (complex IV, CIV), a multisubunit enzyme composed of 14 subunits. The complex is composed of a catalytic core of 3 subunits MT-CO1, MT-CO2 and MT-CO3, encoded in the mitochondrial DNA, and 11 supernumerary subunits COX4I, COX5A, COX5B, COX6A, COX6B, COX6C, COX7A, COX7B, COX7C, COX8 and NDUFA4, which are encoded in the nuclear genome. The complex exists as a monomer or a dimer and forms supercomplexes (SCs) in the inner mitochondrial membrane with NADH-ubiquinone oxidoreductase (complex I, CI) and ubiquinol-cytochrome c oxidoreductase (cytochrome b-c1 complex, complex III, CIII), resulting in different assemblies (supercomplex SCI(1)III(2)IV(1) and megacomplex MCI(2)III(2)IV(2)). Found in a complex with TMEM177, COA6, COX18, COX20, SCO1 and SCO2. Interacts with TMEM177 in a COX20-dependent manner. Interacts with COX20. Interacts with COX16. Requires Cu cation as cofactor.

It localises to the mitochondrion inner membrane. It catalyses the reaction 4 Fe(II)-[cytochrome c] + O2 + 8 H(+)(in) = 4 Fe(III)-[cytochrome c] + 2 H2O + 4 H(+)(out). Its function is as follows. Component of the cytochrome c oxidase, the last enzyme in the mitochondrial electron transport chain which drives oxidative phosphorylation. The respiratory chain contains 3 multisubunit complexes succinate dehydrogenase (complex II, CII), ubiquinol-cytochrome c oxidoreductase (cytochrome b-c1 complex, complex III, CIII) and cytochrome c oxidase (complex IV, CIV), that cooperate to transfer electrons derived from NADH and succinate to molecular oxygen, creating an electrochemical gradient over the inner membrane that drives transmembrane transport and the ATP synthase. Cytochrome c oxidase is the component of the respiratory chain that catalyzes the reduction of oxygen to water. Electrons originating from reduced cytochrome c in the intermembrane space (IMS) are transferred via the dinuclear copper A center (CU(A)) of subunit 2 and heme A of subunit 1 to the active site in subunit 1, a binuclear center (BNC) formed by heme A3 and copper B (CU(B)). The BNC reduces molecular oxygen to 2 water molecules using 4 electrons from cytochrome c in the IMS and 4 protons from the mitochondrial matrix. The polypeptide is Cytochrome c oxidase subunit 2 (MT-CO2) (Acomys ignitus (Fiery spiny mouse)).